Here is a 157-residue protein sequence, read N- to C-terminus: Protein Smg homolog (157 aa).

It belongs to the Smg family.

The protein is Protein Smg homolog of Aeromonas hydrophila subsp. hydrophila (strain ATCC 7966 / DSM 30187 / BCRC 13018 / CCUG 14551 / JCM 1027 / KCTC 2358 / NCIMB 9240 / NCTC 8049).